Here is a 225-residue protein sequence, read N- to C-terminus: Deoxyribose-phosphate aldolase (225 aa).

The active-site Proton donor/acceptor is aspartate 96. Lysine 157 acts as the Schiff-base intermediate with acetaldehyde in catalysis. Lysine 185 functions as the Proton donor/acceptor in the catalytic mechanism.

Belongs to the DeoC/FbaB aldolase family. DeoC type 1 subfamily.

It localises to the cytoplasm. The catalysed reaction is 2-deoxy-D-ribose 5-phosphate = D-glyceraldehyde 3-phosphate + acetaldehyde. The protein operates within carbohydrate degradation; 2-deoxy-D-ribose 1-phosphate degradation; D-glyceraldehyde 3-phosphate and acetaldehyde from 2-deoxy-alpha-D-ribose 1-phosphate: step 2/2. Functionally, catalyzes a reversible aldol reaction between acetaldehyde and D-glyceraldehyde 3-phosphate to generate 2-deoxy-D-ribose 5-phosphate. The sequence is that of Deoxyribose-phosphate aldolase from Microcystis aeruginosa (strain NIES-843 / IAM M-2473).